Reading from the N-terminus, the 138-residue chain is Ribulose bisphosphate carboxylase small subunit (138 aa).

It belongs to the RuBisCO small chain family. Heterohexadecamer of 8 large and 8 small subunits.

The protein resides in the plastid. It is found in the chloroplast. Functionally, ruBisCO catalyzes two reactions: the carboxylation of D-ribulose 1,5-bisphosphate, the primary event in carbon dioxide fixation, as well as the oxidative fragmentation of the pentose substrate in the photorespiration process. Both reactions occur simultaneously and in competition at the same active site. Although the small subunit is not catalytic it is essential for maximal activity. In Pyropia yezoensis (Susabi-nori), this protein is Ribulose bisphosphate carboxylase small subunit.